A 264-amino-acid polypeptide reads, in one-letter code: Thiazole synthase (264 aa).

Lys106 acts as the Schiff-base intermediate with DXP in catalysis. Residues Gly167, 193–194 (AG), and 215–216 (NS) each bind 1-deoxy-D-xylulose 5-phosphate.

It belongs to the ThiG family. Homotetramer. Forms heterodimers with either ThiH or ThiS.

Its subcellular location is the cytoplasm. It carries out the reaction [ThiS sulfur-carrier protein]-C-terminal-Gly-aminoethanethioate + 2-iminoacetate + 1-deoxy-D-xylulose 5-phosphate = [ThiS sulfur-carrier protein]-C-terminal Gly-Gly + 2-[(2R,5Z)-2-carboxy-4-methylthiazol-5(2H)-ylidene]ethyl phosphate + 2 H2O + H(+). It functions in the pathway cofactor biosynthesis; thiamine diphosphate biosynthesis. Its function is as follows. Catalyzes the rearrangement of 1-deoxy-D-xylulose 5-phosphate (DXP) to produce the thiazole phosphate moiety of thiamine. Sulfur is provided by the thiocarboxylate moiety of the carrier protein ThiS. In vitro, sulfur can be provided by H(2)S. The chain is Thiazole synthase from Stutzerimonas stutzeri (strain A1501) (Pseudomonas stutzeri).